Here is a 120-residue protein sequence, read N- to C-terminus: UPF0231 protein ETA_08290 (120 aa).

This sequence belongs to the UPF0231 family.

This chain is UPF0231 protein ETA_08290, found in Erwinia tasmaniensis (strain DSM 17950 / CFBP 7177 / CIP 109463 / NCPPB 4357 / Et1/99).